We begin with the raw amino-acid sequence, 430 residues long: Adenylosuccinate synthetase (430 aa).

GTP contacts are provided by residues G13 to K19 and G41 to T43. The active-site Proton acceptor is D14. D14 and G41 together coordinate Mg(2+). Residues D14–K17, N39–H42, T130, R144, Q225, T240, and R304 contribute to the IMP site. H42 (proton donor) is an active-site residue. S300–R306 lines the substrate pocket. GTP is bound by residues R306, K332–D334, and S414–G416.

This sequence belongs to the adenylosuccinate synthetase family. Homodimer. Mg(2+) serves as cofactor.

Its subcellular location is the cytoplasm. The catalysed reaction is IMP + L-aspartate + GTP = N(6)-(1,2-dicarboxyethyl)-AMP + GDP + phosphate + 2 H(+). The protein operates within purine metabolism; AMP biosynthesis via de novo pathway; AMP from IMP: step 1/2. Functionally, plays an important role in the de novo pathway of purine nucleotide biosynthesis. Catalyzes the first committed step in the biosynthesis of AMP from IMP. The polypeptide is Adenylosuccinate synthetase (Azotobacter vinelandii (strain DJ / ATCC BAA-1303)).